A 570-amino-acid polypeptide reads, in one-letter code: Periplasmic trehalase (570 aa).

An N-terminal signal peptide occupies residues 1 to 34 (MIPPEIRRSVLLQKAIKLALAGTLLTFASFSATA). Substrate-binding positions include R159, 166-167 (WD), N203, 212-214 (RSQ), 284-286 (RPE), and G317. Active-site proton donor/acceptor residues include D319 and E503. Residue E518 participates in substrate binding. Residues 544-570 (KPCDSVPSTRPASLSATPTKTPSAATQ) are disordered. The segment covering 554-570 (PASLSATPTKTPSAATQ) has biased composition (low complexity).

This sequence belongs to the glycosyl hydrolase 37 family. As to quaternary structure, monomer.

It is found in the periplasm. The enzyme catalyses alpha,alpha-trehalose + H2O = alpha-D-glucose + beta-D-glucose. Its function is as follows. Provides the cells with the ability to utilize trehalose at high osmolarity by splitting it into glucose molecules that can subsequently be taken up by the phosphotransferase-mediated uptake system. The chain is Periplasmic trehalase from Salmonella paratyphi A (strain AKU_12601).